The sequence spans 54 residues: Large ribosomal subunit protein bL33 (54 aa).

It belongs to the bacterial ribosomal protein bL33 family.

This chain is Large ribosomal subunit protein bL33, found in Symbiobacterium thermophilum (strain DSM 24528 / JCM 14929 / IAM 14863 / T).